Consider the following 332-residue polypeptide: Glycerol-3-phosphate dehydrogenase [NAD(P)+] (332 aa).

Trp-11, Arg-30, and Lys-108 together coordinate NADPH. Residues Lys-108, Gly-137, and Ser-139 each coordinate sn-glycerol 3-phosphate. Position 141 (Ala-141) interacts with NADPH. Residues Lys-192, Asp-245, Ser-255, Arg-256, and Asn-257 each contribute to the sn-glycerol 3-phosphate site. The active-site Proton acceptor is Lys-192. Arg-256 is a binding site for NADPH. NADPH-binding residues include Val-280 and Glu-282.

Belongs to the NAD-dependent glycerol-3-phosphate dehydrogenase family.

The protein localises to the cytoplasm. It catalyses the reaction sn-glycerol 3-phosphate + NAD(+) = dihydroxyacetone phosphate + NADH + H(+). The enzyme catalyses sn-glycerol 3-phosphate + NADP(+) = dihydroxyacetone phosphate + NADPH + H(+). Its pathway is membrane lipid metabolism; glycerophospholipid metabolism. In terms of biological role, catalyzes the reduction of the glycolytic intermediate dihydroxyacetone phosphate (DHAP) to sn-glycerol 3-phosphate (G3P), the key precursor for phospholipid synthesis. The protein is Glycerol-3-phosphate dehydrogenase [NAD(P)+] of Burkholderia ambifaria (strain MC40-6).